Reading from the N-terminus, the 81-residue chain is Consomatin Le1 (81 aa).

The signal sequence occupies residues 1–22 (MQTAYWVMVMMMVWITAPLSEG). A propeptide spanning residues 23 to 57 (GKPNDVIRGLVPDDLTPQLILRSLISRRRSDKDVR) is cleaved from the precursor. A 4-carboxyglutamate modification is found at E58. A disulfide bridge links C62 with C67. Residue W64 is modified to D-tryptophan. 4-hydroxyproline is present on P69. The propeptide occupies 71–81 (LWRRHDLKGKD).

Belongs to the conotoxin C superfamily. Consomatin family. Expressed by the venom duct.

The protein resides in the secreted. In terms of biological role, moderately activates human somatostatin receptors (SSTR) with a preferential activation of SSTR1 and SSTR4. In vivo, does not cause behavioral changes in mice within a few minutes of intracranial injection, but causes a progressive loss of movement thereafter. Four to five hours after injection, mice recover, even with the highest dose tested. Shows antinociception and antihyperalgesia activities in two mouse models of acute pain, most probably by acting outside the central nervous system. The polypeptide is Consomatin Le1 (Conus lenavati (Cone snail)).